A 77-amino-acid polypeptide reads, in one-letter code: Large ribosomal subunit protein bL28 (77 aa).

It belongs to the bacterial ribosomal protein bL28 family.

This chain is Large ribosomal subunit protein bL28, found in Dechloromonas aromatica (strain RCB).